Reading from the N-terminus, the 480-residue chain is Wax ester synthase/diacylglycerol acyltransferase 7 (480 aa).

The Cytoplasmic segment spans residues 1–193 (MTYGEEEPVS…LRSIFTIGST (193 aa)). Histidine 135 (proton acceptor) is an active-site residue. Residues 194–214 (MRLLWNTTIDMLLLLATVLFL) traverse the membrane as a helical segment. Topologically, residues 215–329 (KDTKTPLKAG…VKDSKCRWGN (115 aa)) are lumenal. N-linked (GlcNAc...) asparagine glycosylation is present at asparagine 252. The chain crosses the membrane as a helical span at residues 330-350 (YFSFIFLPFTIGLQTDPLVYL). The Cytoplasmic segment spans residues 351-365 (KMSKSMMARKKHSYH). A helical membrane pass occupies residues 366 to 386 (AALVYFIIKIVLKVFGAKAAA). Residues 387-480 (ELFDRPVRNT…KASLCERGLL (94 aa)) are Lumenal-facing. Asparagine 395 carries an N-linked (GlcNAc...) asparagine glycan.

It in the N-terminal section; belongs to the long-chain O-acyltransferase family. As to expression, expressed in roots, stems, leaves, flowers and siliques.

Its subcellular location is the cell membrane. It is found in the endoplasmic reticulum membrane. The protein resides in the golgi apparatus membrane. The enzyme catalyses an acyl-CoA + a 1,2-diacyl-sn-glycerol = a triacyl-sn-glycerol + CoA. It carries out the reaction a long chain fatty alcohol + a fatty acyl-CoA = a wax ester + CoA. Its pathway is glycerolipid metabolism; triacylglycerol biosynthesis. It functions in the pathway lipid metabolism. Its function is as follows. Bifunctional wax ester synthase/diacylglycerol acyltransferase that uses acyl-CoAs with 14, 16 and 18 carbons as substrates, preferably in combination with 16:0ol alcohol. Involved in cuticular wax biosynthesis. This Arabidopsis thaliana (Mouse-ear cress) protein is Wax ester synthase/diacylglycerol acyltransferase 7.